A 532-amino-acid chain; its full sequence is MCNPSTTTTTTGSENQESRTGLFLDLFSINSFEPTKRNLRHCENRGSPLMAEAVTEAKSLFTLAFPIAVTALVLYLRSAVSMFFLGQLGDLELAAGSLAIAFANITGYSVLSGLALGMEPLCSQAFGAHRFKLLSLTLHRTVVFLLVCCVPISVLWFNVGKISVYLHQDPDIAKLAQTYLIFSLPDLLTNTLLHPIRIYLRAQGIIHPVTLASLSGAVFHLPANLFLVSYLRLGLTGVAVASSITNIFVVAFLVCYVWASGLHAPTWTDPTRDCFRGWAPLLRLAGPSCVSVCLEWWWYEIMIVLCGLLVNPRSTVAAMGVLIQTTSFLYVFPSSLSFAVSTRVGNELGANRPKTAKLTATVAIVFAAVTGIIAAAFAYSVRNAWGRIFTGDKEILQLTAAALPILGLCEIGNCPQTVGCGVVRGTARPSTAANVNLGAFYLVGMPVAVGLGFWAGIGFNGLWVGLLAAQISCAGLMMYVVGTTDWESEAKKAQTLTCAETVENDIIKAVVASTIDGECDEAEPLIRITVLY.

The next 12 helical transmembrane spans lie at 65–85 (FPIA…MFFL), 98–118 (LAIA…ALGM), 142–162 (VVFL…VGKI), 176–196 (AQTY…LHPI), 208–228 (PVTL…LFLV), 238–258 (VAVA…CYVW), 290–310 (VSVC…GLLV), 316–336 (VAAM…PSSL), 358–378 (LTAT…AAFA), 395–415 (ILQL…GNCP), 439–459 (AFYL…GIGF), and 461–481 (GLWV…MYVV).

The protein belongs to the multi antimicrobial extrusion (MATE) (TC 2.A.66.1) family. In terms of tissue distribution, expressed in the meristematic regions. Mainly detected in tissues where cells were actively dividing, such as leaf primordia and young leaves, the junction between lateral root and the primary root, root cap, hydathodes, the junction between secondary inflorescence and the main inflorescence, young stamen and young siliques. Highly expressed at the junction between the hypocotyl and the root, and at the marginal areas of cotyledons and true leaves, coinciding with the locations of the hydathode. Also highly expressed at the basal regions of the newly emerged lateral roots. In the floral organs, mostly expressed at the style of the pistil.

Its subcellular location is the endosome membrane. The protein localises to the late endosome membrane. Functions as a multidrug and toxin extrusion transporter that negatively regulates plant disease resistance. Plays an important role in maintaining normal plant architecture, possibly by regulating local auxin biosynthesis. May act as a negative regulator of hypocotyl cell elongation in the light. The sequence is that of Protein DETOXIFICATION 51 from Arabidopsis thaliana (Mouse-ear cress).